The sequence spans 555 residues: Intraflagellar transport protein 56 (555 aa).

TPR repeat units follow at residues 57 to 90, 151 to 184, and 393 to 426; these read LKNL…EDPD, IEDQ…HRDY, and DDFN…KYRN.

This sequence belongs to the IFT56 family. As to quaternary structure, component of the IFT complex B.

The protein resides in the cell projection. The protein localises to the cilium. It is found in the flagellum. Component of the intraflagellar transport (IFT) complex B required for transport of proteins in the motile cilium. Required for transport of specific ciliary cargo proteins related to motility, while it is neither required for IFT complex B assembly or motion nor for cilium assembly. This chain is Intraflagellar transport protein 56, found in Chlamydomonas reinhardtii (Chlamydomonas smithii).